A 382-amino-acid polypeptide reads, in one-letter code: Dodecanoyl-[acyl-carrier-protein] hydrolase, chloroplastic (382 aa).

The transit peptide at M1 to N83 directs the protein to the chloroplast. Catalysis depends on residues N283, H285, and C320.

It belongs to the acyl-ACP thioesterase family.

The protein localises to the plastid. Its subcellular location is the chloroplast. It carries out the reaction dodecanoyl-[ACP] + H2O = dodecanoate + holo-[ACP] + H(+). Its function is as follows. Plays an essential role in chain termination during de novo fatty acid synthesis. High thioesterase activity for myristoyl-ACP. The chain is Dodecanoyl-[acyl-carrier-protein] hydrolase, chloroplastic from Cinnamomum camphora (Camphor tree).